Here is a 784-residue protein sequence, read N- to C-terminus: Cadherin-15 (784 aa).

The signal sequence occupies residues 1-21; the sequence is MGSALLLALGLLAQSLGLSWA. Residues 22 to 59 constitute a propeptide that is removed on maturation; sequence VPEPKPSTLYPWRRASAPGRVRRAWVIPPISVSENHKR. Cadherin domains follow at residues 60-151, 152-259, 260-374, 375-480, and 481-589; these read LPYP…RPAF, LQDV…APEF, TKDE…APVF, PENP…DHAP, and ALAL…TCLP. Over 60–605 the chain is Extracellular; the sequence is LPYPLVQIKS…GGGVGVSLGA (546 aa). N-linked (GlcNAc...) asparagine glycans are attached at residues asparagine 106 and asparagine 226. Asparagine 530, asparagine 537, and asparagine 575 each carry an N-linked (GlcNAc...) asparagine glycan. A helical membrane pass occupies residues 606–625; sequence LVIVLASTVVLLVLILLAAL. The Cytoplasmic segment spans residues 626 to 784; the sequence is RTRFRGHSRG…ARLADMYGHQ (159 aa). Residues 676 to 700 form a disordered region; the sequence is EPRATSRSLGRPPLRRDAPFSYVPQ.

In terms of tissue distribution, skeletal muscle.

It localises to the cell membrane. Its function is as follows. Cadherins are calcium-dependent cell adhesion proteins. They preferentially interact with themselves in a homophilic manner in connecting cells; cadherins may thus contribute to the sorting of heterogeneous cell types. M-cadherin is part of the myogenic program and may provide a trigger for terminal muscle differentiation. The polypeptide is Cadherin-15 (Cdh15) (Mus musculus (Mouse)).